Here is a 78-residue protein sequence, read N- to C-terminus: Omega-conotoxin PnVIA (78 aa).

An N-terminal signal peptide occupies residues 1–22 (MKLTCMMIIAVLFLTAWTFVMA). Positions 23–45 (DDPRDEPEARDEMNPAASKLNER) are excised as a propeptide. Intrachain disulfides connect cysteine 47-cysteine 65, cysteine 54-cysteine 69, and cysteine 64-cysteine 73. Residue glutamine 76 is modified to Glutamine amide.

As to expression, expressed by the venom duct.

The protein resides in the secreted. In terms of biological role, omega-conotoxins act at presynaptic membranes, they bind and block voltage-gated calcium channels (Cav). Acts on high voltage-activated (HVA) calcium currents in molluscan neurons. In Conus pennaceus (Feathered cone), this protein is Omega-conotoxin PnVIA.